The primary structure comprises 304 residues: Glutaminase (304 aa).

Residues serine 63, asparagine 113, glutamate 157, asparagine 164, tyrosine 188, tyrosine 240, and valine 258 each contribute to the substrate site.

The protein belongs to the glutaminase family. Homotetramer.

It catalyses the reaction L-glutamine + H2O = L-glutamate + NH4(+). The protein is Glutaminase of Chromobacterium violaceum (strain ATCC 12472 / DSM 30191 / JCM 1249 / CCUG 213 / NBRC 12614 / NCIMB 9131 / NCTC 9757 / MK).